The following is a 595-amino-acid chain: Tumor necrosis factor receptor superfamily member 8 (595 aa).

The first 18 residues, 1-18 (MRVLLAALGLLFLGALRA), serve as a signal peptide directing secretion. The Extracellular segment spans residues 19–385 (FPQDRPFEDT…STGKPVLDAG (367 aa)). TNFR-Cys repeat units lie at residues 28–66 (TCHG…TDCR), 68–106 (QCEP…SRVC), and 107–150 (ECRP…TVCE). Intrachain disulfides connect Cys-29–Cys-44, Cys-45–Cys-58, Cys-48–Cys-65, Cys-69–Cys-81, Cys-84–Cys-98, Cys-87–Cys-106, Cys-108–Cys-122, and Cys-131–Cys-149. Residue Asn-32 is glycosylated (N-linked (GlcNAc...) asparagine). Asn-101 carries N-linked (GlcNAc...) asparagine glycosylation. The tract at residues 167-238 (KEPSSGTIPQ…PTQPCPEGSG (72 aa)) is disordered. The segment covering 179–194 (PTPVSPATSSASTMPV) has biased composition (low complexity). TNFR-Cys repeat units follow at residues 205–241 (ASKL…GDCR), 243–281 (QCEP…SRTC), and 282–325 (ECRP…TTFE). Disulfide bonds link Cys-233–Cys-240, Cys-244–Cys-256, Cys-259–Cys-273, Cys-262–Cys-281, Cys-283–Cys-297, and Cys-289–Cys-300. Asn-276 carries an N-linked (GlcNAc...) asparagine glycan. Positions 323-355 (TFEAPPLGTQPDCNPTPENGEAPASTSPTQSLL) are disordered. An N-linked (GlcNAc...) asparagine glycan is attached at Asn-336. Residues 346 to 355 (ASTSPTQSLL) show a composition bias toward polar residues. A helical membrane pass occupies residues 386 to 406 (PVLFWVILVLVVVVGSSAFLL). The Cytoplasmic segment spans residues 407 to 595 (CHRRACRKRI…DPLPTAASGK (189 aa)). Ser-438 and Ser-452 each carry phosphoserine. Disordered regions lie at residues 438 to 457 (SRPR…TEPV), 485 to 509 (LQDA…STEH), and 536 to 595 (EGRG…ASGK). Over residues 443 to 452 (SSTQLRSGAS) the composition is skewed to polar residues. Positions 499-509 (DLPEPRVSTEH) are enriched in basic and acidic residues.

It belongs to the TNFR8 family. As to quaternary structure, interacts with TRAF1, TRAF2, TRAF3 and TRAF5. Phosphorylated on serine and tyrosine residues. Isoform 2 is constitutively phosphorylated. Detected in alveolar macrophages (at protein level).

The protein localises to the cell membrane. Its subcellular location is the cytoplasm. Its function is as follows. Receptor for TNFSF8/CD30L. May play a role in the regulation of cellular growth and transformation of activated lymphoblasts. Regulates gene expression through activation of NF-kappa-B. The sequence is that of Tumor necrosis factor receptor superfamily member 8 from Homo sapiens (Human).